The following is a 540-amino-acid chain: Chaperonin GroEL (540 aa).

ATP is bound by residues 29-32, 86-90, G413, 476-478, and D492; these read TIGP, DGTTT, and NAA.

This sequence belongs to the chaperonin (HSP60) family. As to quaternary structure, forms a cylinder of 14 subunits composed of two heptameric rings stacked back-to-back. Interacts with the co-chaperonin GroES.

Its subcellular location is the cytoplasm. The catalysed reaction is ATP + H2O + a folded polypeptide = ADP + phosphate + an unfolded polypeptide.. Its function is as follows. Together with its co-chaperonin GroES, plays an essential role in assisting protein folding. The GroEL-GroES system forms a nano-cage that allows encapsulation of the non-native substrate proteins and provides a physical environment optimized to promote and accelerate protein folding. The protein is Chaperonin GroEL of Staphylococcus saprophyticus subsp. saprophyticus (strain ATCC 15305 / DSM 20229 / NCIMB 8711 / NCTC 7292 / S-41).